The chain runs to 379 residues: Cytochrome b (379 aa).

4 consecutive transmembrane segments (helical) span residues 33-53 (FGSL…FLAM), 77-98 (WLIR…FIHV), 113-133 (WNIG…GYVL), and 178-198 (FFAF…VHLL). Heme b is bound by residues His83 and His97. Positions 182 and 196 each coordinate heme b. Residue His201 participates in a ubiquinone binding. The next 4 membrane-spanning stretches (helical) occupy residues 226 to 246 (IKDL…ALFF), 288 to 308 (LGGV…PLLN), 320 to 340 (VTQT…WIGG), and 347 to 367 (FTMI…ILIP).

It belongs to the cytochrome b family. In terms of assembly, the cytochrome bc1 complex contains 11 subunits: 3 respiratory subunits (MT-CYB, CYC1 and UQCRFS1), 2 core proteins (UQCRC1 and UQCRC2) and 6 low-molecular weight proteins (UQCRH/QCR6, UQCRB/QCR7, UQCRQ/QCR8, UQCR10/QCR9, UQCR11/QCR10 and a cleavage product of UQCRFS1). This cytochrome bc1 complex then forms a dimer. It depends on heme b as a cofactor.

Its subcellular location is the mitochondrion inner membrane. Functionally, component of the ubiquinol-cytochrome c reductase complex (complex III or cytochrome b-c1 complex) that is part of the mitochondrial respiratory chain. The b-c1 complex mediates electron transfer from ubiquinol to cytochrome c. Contributes to the generation of a proton gradient across the mitochondrial membrane that is then used for ATP synthesis. This is Cytochrome b (MT-CYB) from Akodon philipmyersi (Myers' grass mouse).